A 305-amino-acid chain; its full sequence is MIKQRTLKRIVQATGVGLHTGKKVTLTLRPAPANTGVIYRRTDLNPPVDFPADAKSVRDTMLCTCLVNEHDVRISTVEHLNAALAGLGIDNIVIEVNAPEIPIMDGSAAPFVYLLLDAGIDALNCAKKFVRIKETVRVEDGDKWAEFRPYNGFTLDFTIDFNHPAIDSSSQRYAMNFSADAFMRQISRARTFGFMRDIEYLQSRGLCLGGSFDCAIVVDDYRVLNEDGLRFEDEFVRHKMLDAIGDLFMCGHNIIGAFTAYKSGHALNNKLLQAVLAKQEAWEFVTFQDDAELPLAFKAPSTVLA.

Zn(2+) contacts are provided by histidine 79, histidine 238, and aspartate 242. Histidine 265 acts as the Proton donor in catalysis.

The protein belongs to the LpxC family. Requires Zn(2+) as cofactor.

The catalysed reaction is a UDP-3-O-[(3R)-3-hydroxyacyl]-N-acetyl-alpha-D-glucosamine + H2O = a UDP-3-O-[(3R)-3-hydroxyacyl]-alpha-D-glucosamine + acetate. It functions in the pathway glycolipid biosynthesis; lipid IV(A) biosynthesis; lipid IV(A) from (3R)-3-hydroxytetradecanoyl-[acyl-carrier-protein] and UDP-N-acetyl-alpha-D-glucosamine: step 2/6. In terms of biological role, catalyzes the hydrolysis of UDP-3-O-myristoyl-N-acetylglucosamine to form UDP-3-O-myristoylglucosamine and acetate, the committed step in lipid A biosynthesis. In Salmonella typhi, this protein is UDP-3-O-acyl-N-acetylglucosamine deacetylase.